Here is a 194-residue protein sequence, read N- to C-terminus: UPF0215 protein PF2042 (194 aa).

It belongs to the UPF0215 family.

In Pyrococcus furiosus (strain ATCC 43587 / DSM 3638 / JCM 8422 / Vc1), this protein is UPF0215 protein PF2042.